Reading from the N-terminus, the 306-residue chain is Follistatin-related protein 1 (306 aa).

Residues 1–18 (MWKRWLALSLVTIALVHG) form the signal peptide. Positions 28 to 51 (ICANVFCGAGRECAVTEKGEPTCL) constitute a Follistatin-like domain. Intrachain disulfides connect Cys-29/Cys-40, Cys-34/Cys-50, Cys-52/Cys-82, Cys-56/Cys-75, and Cys-64/Cys-96. One can recognise a Kazal-like domain in the interval 46 to 98 (GEPTCLCIEQCKPHKRPVCGSNGKTYLNHCELHRDACLTGSKIQVDYDGHCKE). An N-linked (GlcNAc...) asparagine glycan is attached at Asn-142. The region spanning 142-176 (NYSEILDKYFKSFDNGDSHLDSSEFLKFVEQNETA) is the EF-hand 1 domain. Phosphoserine is present on Ser-163. N-linked (GlcNAc...) asparagine glycosylation is found at Asn-173 and Asn-178. In terms of domain architecture, EF-hand 2 spans 191 to 226 (LRSLCVDALIELSDENADWKLSFQEFLKCLNPSFNP). Residues 231–285 (CALEDETYADGAETEVDCNRCVCSCGHWVCTAMTCDGKNQKGVQTHTEEEKTGYV) form the VWFC domain.

As to quaternary structure, homodimer. Interacts with SCN10A. Interacts with DIP2A; DIP2A may act as a cell surface receptor for FSTL1. Interacts with BMP4. Interacts with CD14; this interaction promotes TL4-mediated signaling cascade. As to expression, during central nervous system development, strongly expressed in the telencephalon, diencephalon, brainstem, limbic system and spinal cord. Widely expressed in all organs.

Its subcellular location is the secreted. Secreted glycoprotein that is involved in various physiological processes, such as angiogenesis, regulation of the immune response, cell proliferation and differentiation. Plays a role in the development of the central nervous system, skeletal system, lungs, and ureter. Promotes endothelial cell survival, migration and differentiation into network structures in an AKT-dependent manner. Also promotes survival of cardiac myocytes. Initiates various signaling cascades by activating different receptors on the cell surface such as DIP2A, TLR4 or BMP receptors. The polypeptide is Follistatin-related protein 1 (Fstl1) (Mus musculus (Mouse)).